We begin with the raw amino-acid sequence, 189 residues long: Ribosome maturation factor RimM (189 aa).

The 83-residue stretch at 95–177 folds into the PRC barrel domain; sequence EDDEFYYADL…AGLVDDPEEL (83 aa).

It belongs to the RimM family. Binds ribosomal protein uS19.

The protein localises to the cytoplasm. In terms of biological role, an accessory protein needed during the final step in the assembly of 30S ribosomal subunit, possibly for assembly of the head region. Essential for efficient processing of 16S rRNA. May be needed both before and after RbfA during the maturation of 16S rRNA. It has affinity for free ribosomal 30S subunits but not for 70S ribosomes. This is Ribosome maturation factor RimM from Rhizobium leguminosarum bv. trifolii (strain WSM2304).